The sequence spans 1556 residues: uncharacterized protein (1556 aa).

This is an uncharacterized protein from Ictalurid herpesvirus 1 (strain Auburn) (IcHV-1).